The primary structure comprises 470 residues: MPSPLRQLLELMIQAVETLESVCEEKGISLPDLHAPYTPASEAFLRIPAAIEAANVITAAADHMSAIVSPPTSYLYKFLGGPCRAVAIRACLESNVSEIIREAGPSGIHVDDIAKKNGHDAQKLARFLRYLATHHIYREVSPDVFTHSRLSCFFDTYKPSAEVIANPKQKYDNTRGFAAPASHHLDITFKAAALAWETMDDPKTGHSDELTDAPFARAFPEDKTLWNLLERDAFARNRFDLTMVAVAQRQSPDSIFRAFDWERLPAGALVVEVGGGMGTSAFPLATKYPEMRLVVQDLPDVIAKAEKLWTEKMPDALSSGRVVLQGHDCFAPQPQTDAAVFLLKMILHDWSDEYCVKILRQLRAAARPDTALVIVDCLVPLACRLDDAAEAALPGAVGPQAPPPLLPNYGTVNEYVYNMDVMMHLLFNAQERTVAQFTRVLLRAGWRVCAVHRTQEGNGVFLQSVEAVPA.

S-adenosyl-L-methionine-binding positions include 274–275, aspartate 297, 328–329, and lysine 344; these read GG and DC. Histidine 348 serves as the catalytic Proton acceptor.

The protein belongs to the class I-like SAM-binding methyltransferase superfamily. Cation-independent O-methyltransferase family. COMT subfamily.

Its function is as follows. S-adenosyl-L-methionine-dependent methyltransferase that preferentially catalyzes the methylation of 4-OH phenolic compounds like coniferyl alcohol, vanillyl alcohol and ferrulic acid. May play a role in promoting lignin degradation by methylating and inactivating free-hydroxyl phenolic compounds, products of lignin cleavage which are known inhibitors of lignin peroxidases. In Phanerochaete chrysosporium (strain RP-78 / ATCC MYA-4764 / FGSC 9002) (White-rot fungus), this protein is 4-O-methyltransferase 1.